Reading from the N-terminus, the 484-residue chain is Cobyric acid synthase (484 aa).

The GATase cobBQ-type domain maps to 248-435 (VLKVIVPVLP…LHGLFEGSQS (188 aa)). The active-site Nucleophile is Cys-329. His-427 is an active-site residue.

Belongs to the CobB/CobQ family. CobQ subfamily.

It participates in cofactor biosynthesis; adenosylcobalamin biosynthesis. Catalyzes amidations at positions B, D, E, and G on adenosylcobyrinic A,C-diamide. NH(2) groups are provided by glutamine, and one molecule of ATP is hydrogenolyzed for each amidation. This is Cobyric acid synthase from Pseudomonas putida (strain GB-1).